Reading from the N-terminus, the 313-residue chain is MHVIDSHTGGEPTRVILSGGPHLGSGPLSERAARLARESRAFYRSVMLEPRGQPAMVGALLVEPVDPDCITGVIFFDAEAVLGMCGHGTIGLTVTLAHMGRIRAGTHKIETPVGIVEVCLSDANTVTITNIESRRVHRARQVDVDGFGPVTGDVAYGGNWFFIVDPSPIPIERTNIRALSDAALAIRTAVIANGIGGEEGQPIDHVIFYEMSPRSAVHSRSFVFCPDGTYDRSPCGTGSSARLACLAAEGLLNAGEEIIQESVIGSTYRLSYQPGPNGGVIPKITGQAHVMAESTLHFHTDDPYRNGICHAPQ.

The segment at 1-23 (MHVIDSHTGGEPTRVILSGGPHL) is disordered. C85 functions as the Proton acceptor in the catalytic mechanism. Substrate contacts are provided by residues 86 to 87 (GH), H205, and D231. Residue C235 is the Proton donor of the active site. 236–237 (GT) contacts substrate.

This sequence belongs to the proline racemase family.

The catalysed reaction is trans-4-hydroxy-L-proline = cis-4-hydroxy-D-proline. In terms of biological role, catalyzes the epimerization of trans-4-hydroxy-L-proline (t4LHyp) to cis-4-hydroxy-D-proline (c4DHyp). Is likely involved in a degradation pathway that converts t4LHyp to alpha-ketoglutarate. Displays no proline racemase activity. In Ruegeria pomeroyi (strain ATCC 700808 / DSM 15171 / DSS-3) (Silicibacter pomeroyi), this protein is 4-hydroxyproline 2-epimerase.